The sequence spans 283 residues: Nickel/cobalt efflux system RcnA (283 aa).

Topologically, residues 1 to 12 (MTEFTTLLQQGN) are periplasmic. The chain crosses the membrane as a helical span at residues 13–33 (AWFFIPSAILLGALHGLEPGH). The Cytoplasmic portion of the chain corresponds to 34 to 56 (SKTMMAAFIIAIKGTIKQAVMLG). A helical membrane pass occupies residues 57-77 (LAATISHTAVVWLIAFGGMVI). The Periplasmic segment spans residues 78 to 86 (SKRFTAQSA). The chain crosses the membrane as a helical span at residues 87-107 (EPWLQLISAVIIISTAFWMFW). Over 108–184 (RTWRGERNWL…DGREVTNWQI (77 aa)) the chain is Cytoplasmic. Residues 127 to 162 (DHEHHQDHDHDHDHDHDHEHHHHHEHGDNEEYQDAH) are disordered. Composition is skewed to basic and acidic residues over residues 129–144 (EHHQDHDHDHDHDHDH) and 151–162 (EHGDNEEYQDAH). A helical membrane pass occupies residues 185–205 (LLFGLTGGLIPCPAAITVLLI). The Periplasmic segment spans residues 206-218 (CIQLKALTLGATL). A helical membrane pass occupies residues 219-239 (VVSFSIGLALTLVTVGVGAAI). Residues 240–260 (SVQQVAKRWSGFNTLAKRAPY) lie on the Cytoplasmic side of the membrane. A helical membrane pass occupies residues 261-281 (FSSLLIGLVGVYMGVHGFMGI). Residues 282–283 (MR) are Periplasmic-facing.

The protein belongs to the NiCoT transporter (TC 2.A.52) family. RcnA subfamily.

It localises to the cell inner membrane. Functionally, efflux system for nickel and cobalt. The protein is Nickel/cobalt efflux system RcnA (rcnA) of Escherichia coli O157:H7.